We begin with the raw amino-acid sequence, 420 residues long: MVKDEKELNIAILHPDLGIGGAERLIVDLALGLKSVGNNRITMYTSRHDPKRCFKETSNGELDVHVTGGYFPRHIFNRFMVICAIIRNLLAALYIIFFSGQKYDVIVLDQISASIPLFKLFTNSKVLFYCHFPDKLLTSRTSLIKRLYRIPIDLFEEFTTGCADQVLVNSNFTSSIYKQSFKHLKNSPSVLYPIINTNEFDKTKQSHNFSNQPIENNLINPIKLDDKKFFLSINRYERKKDLKLALDAFSVFISNSESGGSGKGKDEIYLVFAGGYDTGLKENVEHLQELKDKAKEYGLENRVIFLITINEEQKQWLLLNCCCLIYTPSFEHFGITPLEGMYAGKPVIAVNNGGPLETVVDGKTGYLCNPTVKDFANAFNKIINDPINSKKMGINGKQRVNDKFSFKPFAQNLNTIVKKL.

A helical membrane pass occupies residues 79-99 (FMVICAIIRNLLAALYIIFFS).

It belongs to the glycosyltransferase group 1 family.

Its subcellular location is the endoplasmic reticulum membrane. The catalysed reaction is a beta-D-Man-(1-&gt;4)-beta-D-GlcNAc-(1-&gt;4)-alpha-D-GlcNAc-diphospho-di-trans,poly-cis-dolichol + GDP-alpha-D-mannose = an alpha-D-Man-(1-&gt;3)-beta-D-Man-(1-&gt;4)-beta-D-GlcNAc-(1-&gt;4)-alpha-D-GlcNAc-diphospho-di-trans,poly-cis-dolichol + GDP + H(+). It carries out the reaction an alpha-D-Man-(1-&gt;3)-beta-D-Man-(1-&gt;4)-beta-D-GlcNAc-(1-&gt;4)-alpha-D-GlcNAc-diphospho-di-trans,poly-cis-dolichol + GDP-alpha-D-mannose = an alpha-D-Man-(1-&gt;3)-[alpha-D-Man-(1-&gt;6)]-beta-D-Man-(1-&gt;4)-beta-D-GlcNAc-(1-&gt;4)-alpha-D-GlcNAc-diphospho-di-trans,poly-cis-dolichol + GDP + H(+). Its pathway is protein modification; protein glycosylation. Functionally, mannosylates Man(2)GlcNAc(2)-dolichol diphosphate and Man(1)GlcNAc(2)-dolichol diphosphate to form Man(3)GlcNAc(2)-dolichol diphosphate. This is Alpha-1,3/1,6-mannosyltransferase ALG2 (alg2) from Dictyostelium discoideum (Social amoeba).